The chain runs to 242 residues: ATP-dependent dethiobiotin synthetase BioD (242 aa).

Glu12–Val17 contacts ATP. Thr16 is a binding site for Mg(2+). Lys37 is an active-site residue. Ser41 contributes to the substrate binding site. ATP contacts are provided by residues Asp51 and Glu112 to Gly115. The Mg(2+) site is built by Asp51 and Glu112.

Belongs to the dethiobiotin synthetase family. In terms of assembly, homodimer. Requires Mg(2+) as cofactor.

It is found in the cytoplasm. It catalyses the reaction (7R,8S)-7,8-diammoniononanoate + CO2 + ATP = (4R,5S)-dethiobiotin + ADP + phosphate + 3 H(+). It functions in the pathway cofactor biosynthesis; biotin biosynthesis; biotin from 7,8-diaminononanoate: step 1/2. Its function is as follows. Catalyzes a mechanistically unusual reaction, the ATP-dependent insertion of CO2 between the N7 and N8 nitrogen atoms of 7,8-diaminopelargonic acid (DAPA, also called 7,8-diammoniononanoate) to form a ureido ring. This is ATP-dependent dethiobiotin synthetase BioD from Bacillus cereus (strain ATCC 14579 / DSM 31 / CCUG 7414 / JCM 2152 / NBRC 15305 / NCIMB 9373 / NCTC 2599 / NRRL B-3711).